The chain runs to 570 residues: Keratin, type I cytoskeletal 10 (570 aa).

Residues 1–16 (MSVLYSSSSKQFSSSR) show a composition bias toward low complexity. The tract at residues 1–29 (MSVLYSSSSKQFSSSRSGGGGGGGSVRVS) is disordered. Residues 1–143 (MSVLYSSSSK…GDGGSLLSGN (143 aa)) form a head region. A phosphoserine mark is found at serine 15 and serine 17. Arginine 32 is subject to Asymmetric dimethylarginine; alternate. Arginine 32 carries the omega-N-methylarginine; alternate modification. Serine 34, serine 45, serine 48, and serine 168 each carry phosphoserine. The interval 144–179 (GRVTMQNLNDRLASYMDKVRALEESNYELEGKIKEW) is coil 1A. The IF rod domain maps to 144-458 (GRVTMQNLND…SLLEGEGSSS (315 aa)). The linker 1 stretch occupies residues 180–200 (YEKHGNSSQREPRDYSKYYKT). The coil 1B stretch occupies residues 201–292 (IEDLKGQILT…KNHEEEMRDL (92 aa)). Residues 293–315 (QNVSTGDVNVEMNAAPGVDLTQL) form a linker 12 region. Residues 316-454 (LNNMRNQYEQ…QTYRSLLEGE (139 aa)) form a coil 2 region. Positions 451-570 (LEGEGSSSGG…GDQSSKGPRY (120 aa)) are disordered. A tail region spans residues 455 to 570 (GSSSGGGGGR…GDQSSKGPRY (116 aa)). Residues 456–562 (SSSGGGGGRR…GGFKSSGGGD (107 aa)) are compositionally biased toward gly residues.

Belongs to the intermediate filament family. As to quaternary structure, (Microbial infection) Interacts (via C-terminal tail domain) with the S.aureus clumping factor, clfB; this interaction probably mediates S.aureus attachment to the highly keratinized squamous epithelial cells from the nasal cavity. In terms of assembly, heterotetramer of two type I and two type II keratins. Heterodimer with KRT1. Two heterodimers of KRT1 and KRT10 form a heterotetramer. The KRT10 subunit in the heterotetramer is probably disulfide-linked. Interacts with PLEC isoform 1C, when in a heterodimer with KRT1. (Microbial infection) Interacts (via the C-terminal tail domain) with S.pneumoniae serine-rich repeat protein PsrP; this interaction probably mediates S.pneumoniae adherence to lung tissue and subsequent pathogenesis. Expressed in the suprabasal layers of the epidermis throughout the entire sole (at protein level). Expressed in the infundibular regions of the ear, the interscale regions of the tail, and the interfollicular epidermis of the back. Expressed in lung tissue from young mice (at protein level).

The protein resides in the secreted. It localises to the extracellular space. It is found in the cell surface. The protein localises to the cytoplasm. In terms of biological role, plays a role in the establishment of the epidermal barrier on plantar skin. Involved in the maintenance of cell layer development and keratin filament bundles in suprabasal cells of the epithelium. (Microbial infection) Acts as a mediator of S.aureus adherence to desquamated nasal epithelial cells via clfB, and hence may play a role in nasal colonization. Functionally, (Microbial infection) Binds S.pneumoniae PsrP, mediating adherence of the bacteria to lung cell lines. This Mus musculus (Mouse) protein is Keratin, type I cytoskeletal 10 (Krt10).